A 183-amino-acid polypeptide reads, in one-letter code: Ribonuclease H (183 aa).

One can recognise an RNase H type-1 domain in the interval 2–151 (SQARFIAFSD…VDQLAQAAAR (150 aa)). 4 residues coordinate Mg(2+): aspartate 11, glutamate 57, aspartate 79, and aspartate 143.

This sequence belongs to the RNase H family. As to quaternary structure, monomer. It depends on Mg(2+) as a cofactor.

It is found in the cytoplasm. It catalyses the reaction Endonucleolytic cleavage to 5'-phosphomonoester.. Functionally, endonuclease that specifically degrades the RNA of RNA-DNA hybrids. This Anaeromyxobacter dehalogenans (strain 2CP-C) protein is Ribonuclease H.